A 124-amino-acid polypeptide reads, in one-letter code: MaFF-interacting protein (124 aa).

A coiled-coil region spans residues 54-96; the sequence is LVSEVEELYKSITALREKLLQAEQSLRNLKDIHMSLEKDVTAM.

It belongs to the tektin family. Interacts with MIS18A. Interacts (via its coiled-coil region) with MAFF. Strongly expressed in brain, kidney and ovary. Moderately expressed in liver, spleen, thymus, prostate, testis, small intestine and colon. Weakly expressed in heart, placenta, lung and leukocytes.

It localises to the cytoplasm. The protein localises to the nucleus. The protein resides in the nucleolus. Acts as a coactivator of MAFF transcriptional activity. Inhibits cell growth and colony-forming efficiency. This Homo sapiens (Human) protein is MaFF-interacting protein (MAFIP).